The sequence spans 211 residues: Outer-membrane lipoprotein carrier protein (211 aa).

Positions 1–24 (MNTIKILIGLLGIFLFSLSGIVSA) are cleaved as a signal peptide.

The protein belongs to the LolA family. Monomer.

It localises to the periplasm. Its function is as follows. Participates in the translocation of lipoproteins from the inner membrane to the outer membrane. Only forms a complex with a lipoprotein if the residue after the N-terminal Cys is not an aspartate (The Asp acts as a targeting signal to indicate that the lipoprotein should stay in the inner membrane). This Coxiella burnetii (strain RSA 331 / Henzerling II) protein is Outer-membrane lipoprotein carrier protein.